Reading from the N-terminus, the 284-residue chain is NADH-cytochrome b5 reductase 1 (284 aa).

Residues 8 to 28 (PLVIFSTLAAIILAAVAVYVV) traverse the membrane as a helical segment. Residues 41–144 (DVFQKFPLIE…RGPKGFFTYT (104 aa)) enclose the FAD-binding FR-type domain. Residues 124 to 139 (DSKSVGDHIEVRGPKG) and 150 to 182 (HLGMIAGGTGIAPMYQVLTAILTNPDDKTKISL) contribute to the FAD site.

It belongs to the flavoprotein pyridine nucleotide cytochrome reductase family. As to quaternary structure, monomer. Component of the 2-(3-amino-3-carboxypropyl)histidine synthase complex composed of DPH1, DPH2, DPH3 and a NADH-dependent reductase, predominantly CBR1. It depends on FAD as a cofactor.

It is found in the mitochondrion outer membrane. The enzyme catalyses 2 Fe(III)-[cytochrome b5] + NADH = 2 Fe(II)-[cytochrome b5] + NAD(+) + H(+). The catalysed reaction is 2 Fe(3+)-[Dph3] + NADH = 2 Fe(2+)-[Dph3] + NAD(+) + H(+). The protein operates within protein modification; peptidyl-diphthamide biosynthesis. In terms of biological role, NADH-dependent reductase for DPH3 and cytochrome b5. Required for the first step of diphthamide biosynthesis, a post-translational modification of histidine which occurs in elongation factor 2. DPH1 and DPH2 transfer a 3-amino-3-carboxypropyl (ACP) group from S-adenosyl-L-methionine (SAM) to a histidine residue, the reaction is assisted by a reduction system comprising DPH3 and a NADH-dependent reductase, predominantly CBR1. By reducing DPH3, also involved in the formation of the tRNA wobble base modification mcm5s 2U (5-methoxycarbonylmethyl-2-thiouridine), mediated by the elongator complex. The cytochrome b5/NADH cytochrome b5 reductase electron transfer system supports the catalytic activity of several sterol biosynthetic enzymes. This chain is NADH-cytochrome b5 reductase 1 (CBR1), found in Meyerozyma guilliermondii (strain ATCC 6260 / CBS 566 / DSM 6381 / JCM 1539 / NBRC 10279 / NRRL Y-324) (Yeast).